We begin with the raw amino-acid sequence, 186 residues long: High mobility group protein B4 (186 aa).

2 consecutive DNA-binding regions (HMG box) follow at residues 9–79 (PKAN…MNYV) and 93–161 (PRRP…ELYR). A disordered region spans residues 77-98 (NYVGKRKKRRKRDPQEPRRPPS).

Belongs to the HMGB family.

It is found in the nucleus. Its subcellular location is the chromosome. This chain is High mobility group protein B4 (HMGB4), found in Homo sapiens (Human).